We begin with the raw amino-acid sequence, 664 residues long: Intraflagellar transport protein 70A (664 aa).

TPR repeat units follow at residues 11 to 44 (DGEF…SPRS), 45 to 78 (RAGL…HPEL), 153 to 186 (LDGQ…SGYR), 188 to 220 (DLSY…GIRQ), 392 to 423 (LTKQ…EKYI), 424 to 456 (PVLM…CNDH), and 458 to 491 (VWKL…HYDN). Residues 507–534 (YIMTSQNEEAEELMRKIEKEEEQLSYDD) are a coiled coil. The stretch at 543-576 (CIVNLVIGTLYCAKGNYDFGISRVIKSLEPYNKK) is one TPR 8 repeat.

The protein belongs to the TTC30/dfy-1/fleer family.

The protein localises to the cell projection. The protein resides in the cilium. Required for polyglutamylation of axonemal tubulin. Plays a role in anterograde intraflagellar transport (IFT), the process by which cilia precursors are transported from the base of the cilium to the site of their incorporation at the tip. The chain is Intraflagellar transport protein 70A (IFT70A) from Bos taurus (Bovine).